The chain runs to 55 residues: Large ribosomal subunit protein bL33 (55 aa).

This sequence belongs to the bacterial ribosomal protein bL33 family.

This is Large ribosomal subunit protein bL33 from Paraburkholderia phytofirmans (strain DSM 17436 / LMG 22146 / PsJN) (Burkholderia phytofirmans).